A 468-amino-acid chain; its full sequence is MSSGKIAQVVGPVVDVMFASGDKLPEINNALIVYKDSDKKQKIVLEVALELGDGMVRTIAMESTDGLTRGLEVLDTGRAISVPVGKETLGRVFNVLGETIDLEEPFAEDVDRQPIHKKAPSFDELSTSSEILETGIKVIDLLAPYLKGGKVGLFGGAGVGKTVLIQELIHNIAQEHGGISVFTGVGERTREGNDLYWEMKESGVIEKTAMVFGQMNEPPGARMRVALTGLTIAEYFRDVESQDVLLFIDNIFRFTQAGSEVSALLGRMPSAVGYQPTLATEMGQLQERITSTQKGSVTSIQAIYVPADDYTDPAPATAFAHLDSTTNLERKLTQMGIYPAVDPLASSSRALSPEIVGEEHYAVATEVQRVLQRYRELQDIIAILGMDELSDEEKTLVGRARRIQFFLSQNFNVAEQFTGLPGSYVPVAETVRGFKEILEGKYDHLPEDAFRSVGPIEDVIKKAEKMGF.

155–162 contacts ATP; that stretch reads GGAGVGKT.

The protein belongs to the ATPase alpha/beta chains family. F-type ATPases have 2 components, CF(1) - the catalytic core - and CF(0) - the membrane proton channel. CF(1) has five subunits: alpha(3), beta(3), gamma(1), delta(1), epsilon(1). CF(0) has three main subunits: a(1), b(2) and c(9-12). The alpha and beta chains form an alternating ring which encloses part of the gamma chain. CF(1) is attached to CF(0) by a central stalk formed by the gamma and epsilon chains, while a peripheral stalk is formed by the delta and b chains.

It localises to the cell membrane. The enzyme catalyses ATP + H2O + 4 H(+)(in) = ADP + phosphate + 5 H(+)(out). Functionally, produces ATP from ADP in the presence of a proton gradient across the membrane. The catalytic sites are hosted primarily by the beta subunits. This Streptococcus pyogenes serotype M49 (strain NZ131) protein is ATP synthase subunit beta.